Here is a 175-residue protein sequence, read N- to C-terminus: B9 domain-containing protein 2 (175 aa).

A C2 B9-type domain is found at 2 to 118 (AEVHVIGQII…DCPTWRPLGS (117 aa)).

Belongs to the B9D family. Part of the tectonic-like complex (also named B9 complex). Interacts with TUBG1.

Its subcellular location is the cytoplasm. The protein resides in the cytoskeleton. It is found in the cilium basal body. It localises to the cilium axoneme. The protein localises to the nucleus. In terms of biological role, component of the tectonic-like complex, a complex localized at the transition zone of primary cilia and acting as a barrier that prevents diffusion of transmembrane proteins between the cilia and plasma membranes. The chain is B9 domain-containing protein 2 (B9d2) from Rattus norvegicus (Rat).